Here is a 384-residue protein sequence, read N- to C-terminus: Oxoeicosanoid receptor 1 (384 aa).

A disordered region spans residues 1–21; that stretch reads MELHNLSSPSPSLSSSVLPPS. Over 1–58 the chain is Extracellular; the sequence is MELHNLSSPSPSLSSSVLPPSFSPSPSSAPSAFTTVGGSSGGPCHPTSSSLVSAFLAP. The N-linked (GlcNAc...) asparagine glycan is linked to Asn-5. The span at 7–21 shows a compositional bias: low complexity; it reads SSPSPSLSSSVLPPS. A helical membrane pass occupies residues 59–79; that stretch reads ILALEFVLGLVGNSLALFIFC. Topologically, residues 80 to 87 are cytoplasmic; sequence IHTRPWTS. The chain crosses the membrane as a helical span at residues 88 to 108; that stretch reads NTVFLVSLVAADFLLISNLPL. Over 109 to 129 the chain is Extracellular; sequence RVDYYLLHETWRFGAAACKVN. Cys-126 and Cys-198 are oxidised to a cystine. A helical transmembrane segment spans residues 130-152; it reads LFMLSTNRTASVVFLTAIALNRY. The Cytoplasmic segment spans residues 153–172; sequence LKVVQPHHVLSRASVGAAAR. A helical membrane pass occupies residues 173–193; it reads VAGGLWVGILLLNGHLLLSTF. Residues 194–215 lie on the Extracellular side of the membrane; that stretch reads SGPSCLSYRVGTKPSASLRWHQ. Residues 216-236 traverse the membrane as a helical segment; it reads ALYLLEFFLPLALILFAIVSI. At 237 to 256 the chain is on the cytoplasmic side; the sequence is GLTIRNRGLGGQAGPQRAMR. A helical membrane pass occupies residues 257–277; sequence VLAMVVAVYTICFLPSIIFGM. The Extracellular portion of the chain corresponds to 278–297; that stretch reads ASMVAFWLSACRSLDLCTQL. A helical transmembrane segment spans residues 298–318; sequence FHGSLAFTYLNSVLDPVLYCF. Residues 319 to 384 are Cytoplasmic-facing; sequence SSPNFLHQSR…SLEKEGSSQG (66 aa).

The protein belongs to the G-protein coupled receptor 1 family. Expressed in various tissues except brain. Expression is more intense in liver, kidney, peripheral leukocyte, lung, and spleen than in other tissues. Highly expressed in eosinophils, neutrophils, and lung macrophages.

It localises to the membrane. Functionally, receptor for eicosanoids and polyunsaturated fatty acids such as 5-oxo-6E,8Z,11Z,14Z-eicosatetraenoic acid (5-OXO-ETE), 5(S)-hydroperoxy-6E,8Z,11Z,14Z-eicosatetraenoic acid (5(S)-HPETE) and arachidonic acid. Seems to be coupled to the G(i)/G(o), families of heteromeric G proteins. This Homo sapiens (Human) protein is Oxoeicosanoid receptor 1 (OXER1).